The following is a 268-amino-acid chain: Small ribosomal subunit protein uS2 (268 aa).

A laminin-binding region spans residues 161-179 (IPCNNDKYSIALMLWMLAR).

Belongs to the universal ribosomal protein uS2 family. Component of the small ribosomal subunit. Mature ribosomes consist of a small (40S) and a large (60S) subunit. The 40S subunit contains about 33 different proteins and 1 molecule of RNA (18S). The 60S subunit contains about 49 different proteins and 3 molecules of RNA (28S, 5.8S and 5S). Interacts with ribosomal protein S21.

It localises to the cytoplasm. Functionally, required for the assembly and/or stability of the 40S ribosomal subunit. Required for the processing of the 20S rRNA-precursor to mature 18S rRNA in a late step of the maturation of 40S ribosomal subunits. Binds laminin. The polypeptide is Small ribosomal subunit protein uS2 (egmo3) (Echinococcus granulosus (Hydatid tapeworm)).